The chain runs to 375 residues: MAEADSFLHLARPLGPVAVGTAPTTAPLNVVIQPQALFSILDHSLRRNADQERVIGTLLGTRSEDGTEVEIRSTFAVGHTETTDQVEVDMEYQKQMLALHLKANPKEVLVGWYATSSELNTFSALIQNFYSGQGDGTWPHPAVHLTVSTEAGKDIETRAYISAPVGVTAERAADSAAFIPVPYEIRYGEAEKSGLEAIGAARDAEERRANIFTDIEALERAIEDVLGMIDRVSRYVESVIDEEAPASTALGQYLLNTLALAPKVEPADIERDFNNHIQDVLVVSYLANTIRTQMELSNRLATAQLTLGGESGSGESGDKRGGQRGGKGGRGGQQRTQERSGEEARAPYPFLCQPRRTRSYEERTNEAQNGKEEKK.

Residues 30–166 (VVIQPQALFS…TRAYISAPVG (137 aa)) form the MPN domain. The interval 307–375 (LGGESGSGES…EAQNGKEEKK (69 aa)) is disordered. A compositionally biased stretch (gly residues) spans 323–332 (QRGGKGGRGG). Basic and acidic residues-rich tracts occupy residues 336-345 (TQERSGEEAR) and 358-375 (RSYE…EEKK).

This sequence belongs to the eIF-3 subunit F family. In terms of assembly, component of the eukaryotic translation initiation factor 3 (eIF-3) complex.

Its subcellular location is the cytoplasm. In terms of biological role, component of the eukaryotic translation initiation factor 3 (eIF-3) complex, which is involved in protein synthesis of a specialized repertoire of mRNAs and, together with other initiation factors, stimulates binding of mRNA and methionyl-tRNAi to the 40S ribosome. The eIF-3 complex specifically targets and initiates translation of a subset of mRNAs involved in cell proliferation. The sequence is that of Eukaryotic translation initiation factor 3 subunit F from Aspergillus niger (strain ATCC MYA-4892 / CBS 513.88 / FGSC A1513).